A 119-amino-acid chain; its full sequence is Ribonuclease P protein component (119 aa).

Belongs to the RnpA family. As to quaternary structure, consists of a catalytic RNA component (M1 or rnpB) and a protein subunit.

It carries out the reaction Endonucleolytic cleavage of RNA, removing 5'-extranucleotides from tRNA precursor.. RNaseP catalyzes the removal of the 5'-leader sequence from pre-tRNA to produce the mature 5'-terminus. It can also cleave other RNA substrates such as 4.5S RNA. The protein component plays an auxiliary but essential role in vivo by binding to the 5'-leader sequence and broadening the substrate specificity of the ribozyme. This chain is Ribonuclease P protein component, found in Yersinia pseudotuberculosis serotype O:1b (strain IP 31758).